The sequence spans 820 residues: Mitogen-activated protein kinase kinase kinase kinase 2 (820 aa).

A Protein kinase domain is found at 16–273 (FELLQRVGAG…AEKLLQHPFT (258 aa)). ATP contacts are provided by residues 22-30 (VGAGTYGDV) and lysine 45. Aspartate 136 acts as the Proton acceptor in catalysis. The tract at residues 294–314 (LGTPSPEDCELETYDMFPDTI) is PEST1. Position 328 is a phosphoserine (serine 328). The PEST2 stretch occupies residues 344-360 (ETDPLNEPWEEEWTLLG). Residues 387–442 (SEFQELDSPDDTMGTIKRAPFLGPLPTDPPAEEPLSSPPGTLPPPPSGPNSSPLLP) are disordered. A Phosphoserine modification is found at serine 394. Residues 405 to 448 (APFLGPLPTDPPAEEPLSSPPGTLPPPPSGPNSSPLLPTAWATM) form a PEST3 region. The segment covering 422-434 (SSPPGTLPPPPSG) has biased composition (pro residues). The region spanning 482 to 793 (PLRIHAAVTW…IFRVLGAHRD (312 aa)) is the CNH domain.

The protein belongs to the protein kinase superfamily. STE Ser/Thr protein kinase family. STE20 subfamily. In terms of assembly, interacts with TRAF2, TRAF6, MAP3K1/MEKK1 and MAP3K11/MLK3. Interacts with RAB8A. Mg(2+) is required as a cofactor. Polyubiquitinated through 'Lys-48'-polyubiquitin chains, allowing proteasomal turnover. Ubiquitination requires the kinase activity of MAP4K2/GCK. In terms of processing, autophosphorylated in response to tumor necrosis factor (TNF), endotoxins or pro-inflammatory stimuli. Autophosphorylation leads to activation. In terms of tissue distribution, highly expressed in germinal center but not mantle zone B-cells. Also expressed in lung, brain and placenta and at lower levels in other tissues examined.

It is found in the cytoplasm. Its subcellular location is the basolateral cell membrane. It localises to the golgi apparatus membrane. The enzyme catalyses L-seryl-[protein] + ATP = O-phospho-L-seryl-[protein] + ADP + H(+). The catalysed reaction is L-threonyl-[protein] + ATP = O-phospho-L-threonyl-[protein] + ADP + H(+). With respect to regulation, the tumor necrosis factor (TNF), as well as endotoxins and pro-inflammatory stimuli such as polyinosine-polycytidine (poly(IC)), lipopolysaccharides (LPS), peptidoglycan (PGN), flagellin, or lipid A activate MAP4K2 by promoting its autophosphorylation. Serine/threonine-protein kinase which acts as an essential component of the MAP kinase signal transduction pathway. Acts as a MAPK kinase kinase kinase (MAP4K) and is an upstream activator of the stress-activated protein kinase/c-Jun N-terminal kinase (SAP/JNK) signaling pathway and to a lesser extent of the p38 MAPKs signaling pathway. Required for the efficient activation of JNKs by TRAF6-dependent stimuli, including pathogen-associated molecular patterns (PAMPs) such as polyinosine-polycytidine (poly(IC)), lipopolysaccharides (LPS), lipid A, peptidoglycan (PGN), or bacterial flagellin. To a lesser degree, IL-1 and engagement of CD40 also stimulate MAP4K2-mediated JNKs activation. The requirement for MAP4K2/GCK is most pronounced for LPS signaling, and extends to LPS stimulation of c-Jun phosphorylation and induction of IL-8. Enhances MAP3K1 oligomerization, which may relieve N-terminal mediated MAP3K1 autoinhibition and lead to activation following autophosphorylation. Also mediates the SAP/JNK signaling pathway and the p38 MAPKs signaling pathway through activation of the MAP3Ks MAP3K10/MLK2 and MAP3K11/MLK3. May play a role in the regulation of vesicle targeting or fusion. regulation of vesicle targeting or fusion. Activator of the Hippo signaling pathway which plays a pivotal role in organ size control and tumor suppression by restricting proliferation and promoting apoptosis. MAP4Ks act in parallel to and are partially redundant with STK3/MST2 and STK4/MST2 in the phosphorylation and activation of LATS1/2, and establish MAP4Ks as components of the expanded Hippo pathway. The chain is Mitogen-activated protein kinase kinase kinase kinase 2 from Homo sapiens (Human).